The following is a 316-amino-acid chain: Pyridoxal 5'-phosphate synthase subunit PdxS (316 aa).

Residue D44 coordinates D-ribose 5-phosphate. The active-site Schiff-base intermediate with D-ribose 5-phosphate is the K101. G173 serves as a coordination point for D-ribose 5-phosphate. K185 provides a ligand contact to D-glyceraldehyde 3-phosphate. D-ribose 5-phosphate-binding positions include G234 and G255–S256.

Belongs to the PdxS/SNZ family. As to quaternary structure, in the presence of PdxT, forms a dodecamer of heterodimers.

It carries out the reaction aldehydo-D-ribose 5-phosphate + D-glyceraldehyde 3-phosphate + L-glutamine = pyridoxal 5'-phosphate + L-glutamate + phosphate + 3 H2O + H(+). The protein operates within cofactor biosynthesis; pyridoxal 5'-phosphate biosynthesis. Catalyzes the formation of pyridoxal 5'-phosphate from ribose 5-phosphate (RBP), glyceraldehyde 3-phosphate (G3P) and ammonia. The ammonia is provided by the PdxT subunit. Can also use ribulose 5-phosphate and dihydroxyacetone phosphate as substrates, resulting from enzyme-catalyzed isomerization of RBP and G3P, respectively. In Sulfurisphaera tokodaii (strain DSM 16993 / JCM 10545 / NBRC 100140 / 7) (Sulfolobus tokodaii), this protein is Pyridoxal 5'-phosphate synthase subunit PdxS.